The sequence spans 274 residues: Dehydration-responsive element-binding protein 2A (274 aa).

2 stretches are compositionally biased toward basic and acidic residues: residues 1–10 (MERGEGRRGD) and 35–50 (KWWK…ENSS). The interval 1–75 (MERGEGRRGD…KGGPENSNCA (75 aa)) is disordered. The segment at residues 75 to 132 (AYRGVRQRTWGKWVAEIREPNRGRRLWLGSFPTALEAAHAYDEAARAMYGPTARVNFA) is a DNA-binding region (AP2/ERF).

Belongs to the AP2/ERF transcription factor family. ERF subfamily.

The protein resides in the nucleus. Its function is as follows. Transcriptional activator that binds specifically to the DNA sequence 5'-[AG]CCGAC-3' of the cis-acting dehydration-responsive element (DRE). Binding to the C-repeat/DRE element mediates high salinity- and dehydration-inducible transcription. This Oryza sativa subsp. japonica (Rice) protein is Dehydration-responsive element-binding protein 2A (DREB2A).